We begin with the raw amino-acid sequence, 314 residues long: Quinolinate synthase (314 aa).

Iminosuccinate contacts are provided by His-27 and Ser-44. Residue Cys-89 coordinates [4Fe-4S] cluster. Iminosuccinate contacts are provided by residues 115–117 (YIN) and Ser-132. A [4Fe-4S] cluster-binding site is contributed by Cys-175. Iminosuccinate is bound by residues 201–203 (HPE) and Thr-218. Cys-271 serves as a coordination point for [4Fe-4S] cluster.

The protein belongs to the quinolinate synthase family. Type 2 subfamily. Requires [4Fe-4S] cluster as cofactor.

It is found in the cytoplasm. The catalysed reaction is iminosuccinate + dihydroxyacetone phosphate = quinolinate + phosphate + 2 H2O + H(+). Its pathway is cofactor biosynthesis; NAD(+) biosynthesis; quinolinate from iminoaspartate: step 1/1. In terms of biological role, catalyzes the condensation of iminoaspartate with dihydroxyacetone phosphate to form quinolinate. This Ehrlichia chaffeensis (strain ATCC CRL-10679 / Arkansas) protein is Quinolinate synthase.